Reading from the N-terminus, the 553-residue chain is Probable inactive serine/threonine-protein kinase samkD (553 aa).

Residues 24 to 90 (WDNETVCKWL…FEYQILKNCY (67 aa)) form the SAM domain. One can recognise a Protein kinase domain in the interval 134–393 (YQYIETISKN…SKELLKSFWF (260 aa)). ATP-binding positions include 140-148 (ISKNKFCEI) and Lys165.

The protein belongs to the protein kinase superfamily. Ser/Thr protein kinase family.

The protein is Probable inactive serine/threonine-protein kinase samkD (samkD) of Dictyostelium discoideum (Social amoeba).